The chain runs to 271 residues: Pyridoxine kinase (271 aa).

Asn141 provides a ligand contact to ATP. Glu144 serves as a coordination point for Mg(2+). ATP contacts are provided by residues 178 to 182, Asp190, Ile206, Gly215, and Lys240; that span reads TGGGK.

This sequence belongs to the ThiD family. As to quaternary structure, homodimer.

The enzyme catalyses pyridoxal + ATP = pyridoxal 5'-phosphate + ADP + H(+). In terms of biological role, phosphorylates B6 vitamers; functions in a salvage pathway. Uses pyridoxal, pyridoxine, and pyridoxamine as substrates. Can also use hydroxymethylpyrimidine (HMP) as substrate. The protein is Pyridoxine kinase (pdxK) of Bacillus subtilis (strain 168).